Reading from the N-terminus, the 97-residue chain is Protein S100-A10 (97 aa).

Lysine 23 and lysine 28 each carry N6-acetyllysine. Lysine 37 carries the N6-acetyllysine; alternate modification. Residue lysine 37 forms a Glycyl lysine isopeptide (Lys-Gly) (interchain with G-Cter in SUMO2); alternate linkage. Lysine 54 and lysine 57 each carry N6-acetyllysine. The segment at 60 to 71 is ancestral calcium site; sequence DQCRDGKVGFQS.

This sequence belongs to the S-100 family. In terms of assembly, heterotetramer containing 2 light chains of S100A10/p11 and 2 heavy chains of ANXA2/p36. Interacts with SCN10A. Interacts with TASOR.

Its function is as follows. Because S100A10 induces the dimerization of ANXA2/p36, it may function as a regulator of protein phosphorylation in that the ANXA2 monomer is the preferred target (in vitro) of tyrosine-specific kinase. The protein is Protein S100-A10 (S100A10) of Bos taurus (Bovine).